Here is a 367-residue protein sequence, read N- to C-terminus: Ribosomal RNA large subunit methyltransferase M (367 aa).

S-adenosyl-L-methionine-binding positions include Ser-188, 221-224 (CPGG), Asp-240, Asp-260, and Asp-277. Residue Lys-306 is the Proton acceptor of the active site.

It belongs to the class I-like SAM-binding methyltransferase superfamily. RNA methyltransferase RlmE family. RlmM subfamily. In terms of assembly, monomer.

It localises to the cytoplasm. It catalyses the reaction cytidine(2498) in 23S rRNA + S-adenosyl-L-methionine = 2'-O-methylcytidine(2498) in 23S rRNA + S-adenosyl-L-homocysteine + H(+). Catalyzes the 2'-O-methylation at nucleotide C2498 in 23S rRNA. The sequence is that of Ribosomal RNA large subunit methyltransferase M from Serratia proteamaculans (strain 568).